The following is a 328-amino-acid chain: MSQQNILHYDMDVTSVSWVKDNTYQITIHVKAVKDIPLKYLWSLKIIGVNGPSSTVQLYGKNEKTYLISDPTDFTSTFQVYAYPSSDGCTVWMPNFQIQFEYLQGDAAQYWQTWQWGTTTFDLSTGCNNYDNQGHSQTDFPGFYWTYQCKGNNDGTCTKASSSSITTSSITTSSTTTSSTTTSSTTTSSSTTSSSTTSSSTTSSSTTSSSTTSSSTTSSSTTSSSTTSSSTTSSSTTSSSTTSSSTKTSTTTSSTVKSSSTTSIDFTTSVDSHTSSSVADIYRSRTSTDVTTLAASTSPFSSFTSSDSSSSSDVTSSTIQTTSVDPTT.

The 155-residue stretch at 1-155 (MSQQNILHYD…TYQCKGNNDG (155 aa)) folds into the Flo11 domain. 2 disordered regions span residues 168–259 (SSIT…VKSS) and 286–328 (TSTD…DPTT). Residues 291 to 328 (TTLAASTSPFSSFTSSDSSSSSDVTSSTIQTTSVDPTT) show a composition bias toward low complexity.

This is Bypass of stop codon protein 1 (BSC1) from Saccharomyces cerevisiae (strain ATCC 204508 / S288c) (Baker's yeast).